A 185-amino-acid polypeptide reads, in one-letter code: Putative manganese efflux pump MntP (185 aa).

The next 6 membrane-spanning stretches (helical) occupy residues 4 to 24 (LTSSLIGIGLSMDCFAVALAI), 36 to 56 (ALVIAASFGIFQAGMTIAGWI), 65 to 85 (ISSYGSWIAFLLLAGIGIKMI), 105 to 125 (VILLSLATSIDAFAAGVSFGV), 130 to 150 (VLMPALAIGLVCFVVSCAGVF), and 165 to 185 (IFGGVILILIGIQILTDILPL).

It belongs to the MntP (TC 9.B.29) family.

It localises to the cell membrane. Probably functions as a manganese efflux pump. The protein is Putative manganese efflux pump MntP of Methanoregula boonei (strain DSM 21154 / JCM 14090 / 6A8).